Here is a 420-residue protein sequence, read N- to C-terminus: Transcription factor IIIB 50 kDa subunit (420 aa).

A TFIIB-type zinc finger spans residues 3–36; it reads NGSRCPDCGSSELVEDSHYSQSQLVCSDCGCVVT. The Zn(2+) site is built by C7, C10, C28, and C31. Repeat copies occupy residues 72–157 and 173–249. The interval 108 to 114 is interaction with target DNA; sequence AARLQKK. The disordered stretch occupies residues 316–387; that stretch reads TAEVETQQQQ…AVTGDEDISD (72 aa). Residues 322–336 show a composition bias toward low complexity; sequence QQQQQQQQGQGQGQQ. S354 carries the post-translational modification Phosphoserine. Positions 358–364 are required for the formation of a ternary complex with DNA and TBP; not required for interaction with TBP in the absence of DNA; it reads LLPPCML. C362 carries the post-translational modification Cysteine sulfenic acid (-SOH). The segment at 366–420 is required for interaction with TBP and formation of a ternary complex with DNA and TBP; sequence PPKRTHTLPPESAVTGDEDISDSEIEQYLRTPQEVRDFERAQAASQAAMRVPNPP.

This sequence belongs to the TFIIB family. As to quaternary structure, component of TFIIIB complexes. The TFIIIB complex has two activities, alpha and beta. The TFIIIB-alpha activity complex is composed of TBP, BDP1, and a complex containing both BRF2 and at least four stably associated proteins; this complex inhibits the transcription by pol III via its phosphorylation by CK2; YY1 facilitates the TFIIIB-alpha complex formation. Interacts with TBP; this interaction promotes recruitment of BRF2 to TATA box-containing promoters. Interacts with TBP and the BURE sequence (GC-rich sequence downstream from the TATA box) to form a strong ternary complex which is joined by BDP1; this ternary complex stimulates pol III transcription. Forms a trimeric complex composed of TBP, BRF2 and mini-SNAPc complex (SNAP43, SNAP50, and the N-terminal third of SNAP190) on the promoter. Assembly of the TBP-BRF2 complex is stimulated by SNAP190. Interacts with MAF1 and SNAPC4. In response to oxidative stress, Cys-362 is reversibly oxidized to cysteine sulfenic acid. Oxidation of Cys-362 impairs formation of a ternary complex with TBP and DNA and down-regulates expression of target genes in response to oxidative stress.

It is found in the nucleus. General activator of RNA polymerase III transcription. Factor exclusively required for RNA polymerase III transcription of genes with promoter elements upstream of the initiation sites. Contributes to the regulation of gene expression; functions as activator in the absence of oxidative stress. Down-regulates expression of target genes in response to oxidative stress. Overexpression protects cells against apoptosis in response to oxidative stress. The polypeptide is Transcription factor IIIB 50 kDa subunit (Brf2) (Mus musculus (Mouse)).